The chain runs to 396 residues: Cathepsin D (396 aa).

A signal peptide spans Met-1–Ala-18. The propeptide at Leu-19–Asn-61 is activation peptide. Residues Tyr-76 to Ala-393 enclose the Peptidase A1 domain. Asp-94 is a catalytic residue. An intrachain disulfide couples Cys-107 to Cys-114. 2 N-linked (GlcNAc...) asparagine glycosylation sites follow: Asn-131 and Asn-249. Cys-272 and Cys-276 are joined by a disulfide. Asp-281 is a catalytic residue. Cys-315 and Cys-352 are joined by a disulfide.

It belongs to the peptidase A1 family. In terms of assembly, monomer.

The protein resides in the lysosome. The catalysed reaction is Specificity similar to, but narrower than, that of pepsin A. Does not cleave the 4-Gln-|-His-5 bond in B chain of insulin.. Inhibited by pepstatin. Functionally, acid protease active in intracellular protein breakdown. The polypeptide is Cathepsin D (ctsd) (Chionodraco hamatus (Antarctic teleost icefish)).